We begin with the raw amino-acid sequence, 356 residues long: DNA-directed RNA polymerase subunit alpha (356 aa).

Residues Met1–Glu230 are alpha N-terminal domain (alpha-NTD). Residues Ile267–Gly356 form an alpha C-terminal domain (alpha-CTD) region.

The protein belongs to the RNA polymerase alpha chain family. In plastids the minimal PEP RNA polymerase catalytic core is composed of four subunits: alpha, beta, beta', and beta''. When a (nuclear-encoded) sigma factor is associated with the core the holoenzyme is formed, which can initiate transcription.

The protein localises to the plastid. It localises to the chloroplast. It catalyses the reaction RNA(n) + a ribonucleoside 5'-triphosphate = RNA(n+1) + diphosphate. Functionally, DNA-dependent RNA polymerase catalyzes the transcription of DNA into RNA using the four ribonucleoside triphosphates as substrates. The protein is DNA-directed RNA polymerase subunit alpha of Zygnema circumcarinatum (Green alga).